Reading from the N-terminus, the 451-residue chain is Velvet complex subunit 2 (451 aa).

3 disordered regions span residues 1-95 (MNTT…PRSI), 205-312 (PGQS…QTNP), and 426-451 (PIRK…DDDY). 3 stretches are compositionally biased toward polar residues: residues 18–28 (TMPSLHDTTYR), 40–62 (MPQT…NSLP), and 205–217 (PGQS…SPTY). Residues 92–428 (PRSITVDGRK…ATQGIKIPIR (337 aa)) enclose the Velvet domain. The span at 267–283 (PQQSNYYYPQPSQSIPS) shows a compositional bias: low complexity. Basic and acidic residues predominate over residues 427-445 (IRKDGKDGPGKGGKDGSRG).

It belongs to the velvet family. VelB subfamily. As to quaternary structure, component of the heterotrimeric velvet complex composed of LAE1, VEL1 and VEL2; VEL1 acting as a bridging protein between LAE1 and VEL2. Forms a heterodimeric complex with VOS1; the formation of the VEL2-VOS1 complex is light-dependent.

Its subcellular location is the nucleus. It is found in the cytoplasm. In terms of biological role, component of the velvet transcription factor complex that controls sexual/asexual developmental ratio in response to light, promoting sexual development in the darkness while stimulating asexual sporulation under illumination. The velvet complex acts as a global regulator for secondary metabolite gene expression. Component of the VEL2-VOS1 heterodimeric complex that plays a dual role in activating genes associated with spore maturation and repressing certain development-associated genes. The VEL2-VOS1 complex binds DNA through the DNA-binding domain of VOS1 that recognizes an 11-nucleotide consensus sequence 5'-CTGGCCGCGGC-3' consisting of two motifs in the promoters of key developmental regulatory genes. Controls the expression of the oxalic acid and melanin gene clusters. Involved in the resistance to oxidative stress. Required for full virulence. This is Velvet complex subunit 2 from Botryotinia fuckeliana (strain B05.10) (Noble rot fungus).